The sequence spans 194 residues: GTP cyclohydrolase 1 (194 aa).

Zn(2+)-binding residues include C83, H86, and C155.

Belongs to the GTP cyclohydrolase I family. Toroid-shaped homodecamer, composed of two pentamers of five dimers.

It carries out the reaction GTP + H2O = 7,8-dihydroneopterin 3'-triphosphate + formate + H(+). It functions in the pathway cofactor biosynthesis; 7,8-dihydroneopterin triphosphate biosynthesis; 7,8-dihydroneopterin triphosphate from GTP: step 1/1. This is GTP cyclohydrolase 1 (folE) from Streptococcus pyogenes serotype M1.